A 2157-amino-acid polypeptide reads, in one-letter code: MGAQVSRQNVGTHSTQNSVSNGSSLNYFNINYFKDAASSGASRLDFSQDPSKFTDPVKDVLEKGIPTLQSPSVEACGYSDRIIQITRGDSTITSQDVANAVVGYGVWPHYLTPQDATAIDKPTQPDTSSNRFYTLESKHWNGDSKGWWWKLPDALKEMGIFGENMYYHFLGRSGYTVHVQCNASKFHQGTLLVAMIPEHQLASAKNGSVTAGYNLTHPGEAGRVVGQQRDANLRQPSDDSWLNFDGTLLGNLLIFPHQFINLRSNNSATLIVPYVNAVPMDSMLRHNNWSLVIIPISPLRSETTSSNIRPITVSISPMCAEFSGARAKNVRQGLPVYITPGSGQFMTTDDMQSPCALPWYHPTKEISIPGEVKNLIEMCQVDTLIPVNNVGTNVGNISMYTVQLGNQMDMAQEVFAIKVDITSQPLATTLIGEIASYYTHWTGSLRFSFMFCGTANTTLKLLLAYTPPGIDKPATRKDAMLGTHVVWDVGLQSTISLVVPWVSASHFRLTANDKYSMAGYITCWYQTNLVVPPNTPQTADMLCFVSACKDFCLRMARDTDLHIQSGPIEQNPVENYIDEVLNEVLVVPNIKESHHTTSNSAPLLDAAETGHTSNVQPEDAIETRYVMTSQTRDEMSIESFLGRSGCVHISRIKVDYNDYNGVNKNFTTWKITLQEMAQIRRKFELFTYVRFDSEVTLVPCIAGRGDDIGHVVMQYMYVPPGAPIPKTRNDFSWQSGTNMSIFWQHGQPFPRFSLPFLSIASAYYMFYDGYDGDNSSSKYGSIVTNDMGTICSRIVTEKQEHPVVITTHIYHKAKHTKAWCPRPPRAVPYTHSRVTNYVPKTGDVTTAIVPRASMKTVGPSDLYVHVGNLIYRNLHLFNSEMHDSILVSYSSDLIIYRTNTTGDDYIPSCNCTEATYYCKHKNRYYPIKVTPHDWYEIQESEYYPKHIQYNLLIGEGPCEPGDCGGKLLCRHGVIGIITAGGEGHVAFTDLRQFQCAEEQGITDYIHMLGEAFGNGFVDSVKEQINAINPINSISKKVIKWLLRIISAMVIIIRNSSDPQTIIATLTLIGCNGSPWRFLKEKFCKWTQLTYIHKESDSWLKKFTEMCNAARGLEWIGNKISKFIDWMKSMLPQAQLKVKYLNEIKKLSLLEKQIENLRAADNATQEKIKCEIDTLHDLSCKFLPLYAHEAKRIKVLYNKCSNIIKQRKRSEPVAVMIHGPPGTGKSITTNFLARMITNESDVYSLPPDPKYFDGYDNQSVVIMDDIMQNPDGEDMTLFCQMVSSVTFIPPMADLPDKGKPFDSRFVLCSTNHSLLAPPTISSLPAMNRRFFFDLDIVVHDNYKDAQGKLNVSKAFQPCNVNTKIGNAKCCPFVCGKAVSFKDRSTCSTYTLAQVYNHILEEDKRRRQVVDVMSAIFQGPISLDAPPPPAIADLLQSVRTPEVIKYCQDNKWIVPAECQIERDLSIANSIITIIANIISIAGIIFVIYKLFCTLQGPYSGEPKPKTKMPERRVVAQGPEEEFGRSILKNNTCVITTDNGKFTGLGIYDRTLIIPTHADPGREVQVNGIHTKVLDSYDLYNRDGVKLEITVIQLDRNEKFRDIRKYIPETEDDYPECNLALSANQVEPTIIKVGDVVSYGNILLSGNQTARMLKYNYPTKSGYCGGVLYKIGQILGIHVGGNGRDGFSAMLLRSYFTDTQGQIKISKHANECGLPTIHTPSKTKLQPSVFYDVFPGSKEPAVSRDNDPRLKVNFKEALFSKYKGNTECSLNQHMEIAIAHYSAQLITLDIDSKPIALEDSVFGIEGLEALDLNTSAGFPYVTMGIKKRDLINNKTKDISRLKEALDKYGVDLPMITFLKDELRKKEKISAGKTRVIEASSINDTILFRTTFGNLFSKFHLNPGVVTGSAVGCDPETFWSKIPVMLDGDCIMAFDYTNYDGSIHPVWFQALKKVLENLSFQSNLIDRLCYSKHLFKSTYYEVAGGVPSGCSGTSIFNTMINNIIIRTLVLDAYKNIDLDKLKIIAYGDDVIFSYKYTLDMEAIANEGKKYGLTITPADKSTEFKKLDYNNVTFLKRGFKQDEKHTFLIHPTFPVEEIYESIRWTKKPSQMQEHVLSLCHLMWHNGRKVYEDFSSKIRSVSAGRALYIPPYDLLKHEWYEKF.

A lipid anchor (N-myristoyl glycine; by host) is attached at glycine 2. At 2–1470 (GAQVSRQNVG…DLSIANSIIT (1469 aa)) the chain is on the cytoplasmic side. The amphipathic alpha-helix stretch occupies residues 567–584 (PIEQNPVENYIDEVLNEV). Catalysis depends on for protease 2A activity residues histidine 875 and aspartate 892. Cysteine 909 and cysteine 911 together coordinate Zn(2+). Residue cysteine 963 is the For protease 2A activity of the active site. Zn(2+) is bound by residues cysteine 969 and histidine 971. The membrane-binding stretch occupies residues 1095-1164 (SDSWLKKFTE…NLRAADNATQ (70 aa)). An oligomerization region spans residues 1095–1228 (SDSWLKKFTE…PPGTGKSITT (134 aa)). The segment at 1116–1120 (GNKIS) is RNA-binding. The region spanning 1188-1350 (EAKRIKVLYN…YKDAQGKLNV (163 aa)) is the SF3 helicase domain. Zn(2+) contacts are provided by cysteine 1357, cysteine 1368, and cysteine 1373. A C4-type; degenerate zinc finger spans residues 1357–1373 (CNVNTKIGNAKCCPFVC). Positions 1400 to 1407 (EDKRRRQV) are RNA-binding. The oligomerization stretch occupies residues 1411 to 1416 (MSAIFQ). An intramembrane segment occupies 1471 to 1486 (IIANIISIAGIIFVIY). The Cytoplasmic portion of the chain corresponds to 1487-2157 (KLFCTLQGPY…LLKHEWYEKF (671 aa)). Tyrosine 1496 is modified (O-(5'-phospho-RNA)-tyrosine). One can recognise a Peptidase C3 domain in the interval 1515–1693 (GPEEEFGRSI…FSAMLLRSYF (179 aa)). Catalysis depends on for protease 3C activity residues histidine 1554, glutamate 1585, and cysteine 1661. The 114-residue stretch at 1925-2038 (DCIMAFDYTN…SYKYTLDMEA (114 aa)) folds into the RdRp catalytic domain. Mg(2+) is bound by residues aspartate 1931 and aspartate 2024.

The protein belongs to the picornaviruses polyprotein family. Interacts with capsid protein VP1 and capsid protein VP3 to form heterotrimeric protomers. In terms of assembly, interacts with capsid protein VP0, and capsid protein VP3 to form heterotrimeric protomers. Five protomers subsequently associate to form pentamers which serve as building blocks for the capsid. Interacts with capsid protein VP2, capsid protein VP3 and capsid protein VP4 following cleavage of capsid protein VP0. As to quaternary structure, interacts with capsid protein VP1 and capsid protein VP3 in the mature capsid. Interacts with capsid protein VP0 and capsid protein VP1 to form heterotrimeric protomers. Five protomers subsequently associate to form pentamers which serve as building blocks for the capsid. Interacts with capsid protein VP4 in the mature capsid. Interacts with protein 2C; this interaction may be important for virion morphogenesis. In terms of assembly, interacts with capsid protein VP1 and capsid protein VP3. As to quaternary structure, homodimer. Homohexamer; forms a hexameric ring structure with 6-fold symmetry characteristic of AAA+ ATPases. Interacts (via N-terminus) with host RTN3 (via reticulon domain); this interaction is important for viral replication. Interacts with capsid protein VP3; this interaction may be important for virion morphogenesis. In terms of assembly, interacts with protein 3CD. As to quaternary structure, homodimer. Interacts with host GBF1. Interacts (via GOLD domain) with host ACBD3 (via GOLD domain); this interaction allows the formation of a viral protein 3A/ACBD3 heterotetramer with a 2:2 stoichiometry, which will stimulate the recruitment of host PI4KB in order to synthesize PI4P at the viral RNA replication sites. Interacts with RNA-directed RNA polymerase. In terms of assembly, interacts with protein 3AB and with RNA-directed RNA polymerase. As to quaternary structure, interacts with Viral protein genome-linked and with protein 3CD. Mg(2+) serves as cofactor. Specific enzymatic cleavages in vivo by the viral proteases yield processing intermediates and the mature proteins. In terms of processing, myristoylation is required for the formation of pentamers during virus assembly. Further assembly of 12 pentamers and a molecule of genomic RNA generates the provirion. Post-translationally, during virion maturation, immature virions are rendered infectious following cleavage of VP0 into VP4 and VP2. This maturation seems to be an autocatalytic event triggered by the presence of RNA in the capsid and it is followed by a conformational change infectious virion. Myristoylation is required during RNA encapsidation and formation of the mature virus particle. In terms of processing, VPg is uridylylated by the polymerase into VPg-pUpU. This acts as a nucleotide-peptide primer for the genomic RNA replication.

It localises to the virion. It is found in the host cytoplasm. Its subcellular location is the host cytoplasmic vesicle membrane. The protein localises to the host nucleus. It carries out the reaction a ribonucleoside 5'-triphosphate + H2O = a ribonucleoside 5'-diphosphate + phosphate + H(+). It catalyses the reaction Selective cleavage of Tyr-|-Gly bond in the picornavirus polyprotein.. The catalysed reaction is RNA(n) + a ribonucleoside 5'-triphosphate = RNA(n+1) + diphosphate. The enzyme catalyses Selective cleavage of Gln-|-Gly bond in the poliovirus polyprotein. In other picornavirus reactions Glu may be substituted for Gln, and Ser or Thr for Gly.. Its activity is regulated as follows. Replication or transcription is subject to high level of random mutations by the nucleotide analog ribavirin. Forms an icosahedral capsid of pseudo T=3 symmetry with capsid proteins VP2 and VP3. The capsid is 300 Angstroms in diameter, composed of 60 copies of each capsid protein and enclosing the viral positive strand RNA genome. Capsid protein VP1 mainly forms the vertices of the capsid. Capsid protein VP1 interacts with host cell receptor to provide virion attachment to target host cells. This attachment induces virion internalization. Tyrosine kinases are probably involved in the entry process. After binding to its receptor, the capsid undergoes conformational changes. Capsid protein VP1 N-terminus (that contains an amphipathic alpha-helix) and capsid protein VP4 are externalized. Together, they shape a pore in the host membrane through which viral genome is translocated to host cell cytoplasm. Its function is as follows. Forms an icosahedral capsid of pseudo T=3 symmetry with capsid proteins VP2 and VP3. The capsid is 300 Angstroms in diameter, composed of 60 copies of each capsid protein and enclosing the viral positive strand RNA genome. In terms of biological role, lies on the inner surface of the capsid shell. After binding to the host receptor, the capsid undergoes conformational changes. Capsid protein VP4 is released, Capsid protein VP1 N-terminus is externalized, and together, they shape a pore in the host membrane through which the viral genome is translocated into the host cell cytoplasm. Functionally, component of immature procapsids, which is cleaved into capsid proteins VP4 and VP2 after maturation. Allows the capsid to remain inactive before the maturation step. Cysteine protease that cleaves viral polyprotein and specific host proteins. It is responsible for the autocatalytic cleavage between the P1 and P2 regions, which is the first cleavage occurring in the polyprotein. Also cleaves the host translation initiation factor EIF4G1, in order to shut down the capped cellular mRNA translation. Inhibits the host nucleus-cytoplasm protein and RNA trafficking by cleaving host members of the nuclear pores. Counteracts stress granule formation probably by antagonizing its assembly or promoting its dissassembly. Its function is as follows. Plays an essential role in the virus replication cycle by acting as a viroporin. Creates a pore in the host endoplasmic reticulum and as a consequence releases Ca2+ in the cytoplasm of infected cell. In turn, high levels of cytoplasmic calcium may trigger membrane trafficking and transport of viral ER-associated proteins to viroplasms, sites of viral genome replication. In terms of biological role, induces and associates with structural rearrangements of intracellular membranes. Displays RNA-binding, nucleotide binding and NTPase activities. May play a role in virion morphogenesis and viral RNA encapsidation by interacting with the capsid protein VP3. Functionally, localizes the viral replication complex to the surface of membranous vesicles. Together with protein 3CD binds the Cis-Active RNA Element (CRE) which is involved in RNA synthesis initiation. Acts as a cofactor to stimulate the activity of 3D polymerase, maybe through a nucleid acid chaperone activity. Localizes the viral replication complex to the surface of membranous vesicles. It inhibits host cell endoplasmic reticulum-to-Golgi apparatus transport and causes the disassembly of the Golgi complex, possibly through GBF1 interaction. This would result in depletion of MHC, trail receptors and IFN receptors at the host cell surface. Plays an essential role in viral RNA replication by recruiting ACBD3 and PI4KB at the viral replication sites, thereby allowing the formation of the rearranged membranous structures where viral replication takes place. Its function is as follows. Acts as a primer for viral RNA replication and remains covalently bound to viral genomic RNA. VPg is uridylylated prior to priming replication into VPg-pUpU. The oriI viral genomic sequence may act as a template for this. The VPg-pUpU is then used as primer on the genomic RNA poly(A) by the RNA-dependent RNA polymerase to replicate the viral genome. During genome replication, the VPg-RNA linkage is removed by the host TDP2, thereby accelerating replication. During the late stage of the replication cycle, host TDP2 is excluded from sites of viral RNA synthesis and encapsidation, allowing for the generation of progeny virions. In terms of biological role, involved in the viral replication complex and viral polypeptide maturation. It exhibits protease activity with a specificity and catalytic efficiency that is different from protease 3C. Protein 3CD lacks polymerase activity. Protein 3CD binds to the 5'UTR of the viral genome. Functionally, replicates the viral genomic RNA on the surface of intracellular membranes. May form linear arrays of subunits that propagate along a strong head-to-tail interaction called interface-I. Covalently attaches UMP to a tyrosine of VPg, which is used to prime RNA synthesis. The positive stranded RNA genome is first replicated at virus induced membranous vesicles, creating a dsRNA genomic replication form. This dsRNA is then used as template to synthesize positive stranded RNA genomes. ss(+)RNA genomes are either translated, replicated or encapsidated. Major viral protease that mediates proteolytic processing of the polyprotein. Cleaves host EIF5B, contributing to host translation shutoff. Also cleaves host PABPC1, contributing to host translation shutoff. Cleaves host NLRP1, triggers host N-glycine-mediated degradation of the autoinhibitory NLRP1 N-terminal fragment. This chain is Genome polyprotein, found in Homo sapiens (Human).